The following is a 30-amino-acid chain: 80 kDa carcinoembryonic antigen-binding protein (30 aa).

In terms of assembly, binds to carcinoembryonic antigen (CEA). In terms of processing, the N-terminus is blocked.

The protein resides in the cell membrane. Its function is as follows. May play a role in the development of hepatic metastases from colorectal cancers. This chain is 80 kDa carcinoembryonic antigen-binding protein, found in Rattus norvegicus (Rat).